We begin with the raw amino-acid sequence, 140 residues long: MVMDHDINGNGKFDDKELPGLKKGYFDNLKSYQYFTHLRLGTKKLEVPSPTKFVASIADGRVTFRFFVPLGLRLDAKTPLAVAFYDDTFFTDMVFNKSGPVALKVTDGGKGSVALRASPSLSYYSGQVVPTYAFITWSPS.

This is an uncharacterized protein from Spirochaeta aurantia.